A 274-amino-acid polypeptide reads, in one-letter code: Diaminopimelate epimerase (274 aa).

Substrate-binding residues include Asn-11, Gln-44, and Asn-64. Residue Cys-73 is the Proton donor of the active site. Residues 74 to 75 (GN), Asn-157, Asn-190, and 208 to 209 (ER) each bind substrate. Cys-217 (proton acceptor) is an active-site residue. 218–219 (GS) contributes to the substrate binding site.

Belongs to the diaminopimelate epimerase family. Homodimer.

The protein resides in the cytoplasm. The catalysed reaction is (2S,6S)-2,6-diaminopimelate = meso-2,6-diaminopimelate. It participates in amino-acid biosynthesis; L-lysine biosynthesis via DAP pathway; DL-2,6-diaminopimelate from LL-2,6-diaminopimelate: step 1/1. Its function is as follows. Catalyzes the stereoinversion of LL-2,6-diaminopimelate (L,L-DAP) to meso-diaminopimelate (meso-DAP), a precursor of L-lysine and an essential component of the bacterial peptidoglycan. This Haemophilus influenzae (strain PittGG) protein is Diaminopimelate epimerase.